The chain runs to 297 residues: Protein muscleblind (297 aa).

2 C3H1-type zinc fingers span residues 18–46 (WLQLEVCREFQRNKCSRQDTECKFAHPPA) and 52–80 (NGKVTACYDSIKGRCNRDKPPCKYFHPPQ).

Belongs to the muscleblind family. In terms of tissue distribution, expressed in embryonic muscle cells.

The protein localises to the nucleus. Its function is as follows. Required for terminal differentiation of photoreceptor cells. Vital for embryonic development. The protein is Protein muscleblind (mbl) of Drosophila melanogaster (Fruit fly).